Reading from the N-terminus, the 682-residue chain is Nephrocystin-1-like protein (682 aa).

A coiled-coil region spans residues 10–100 (LQDAINRFPQ…ALSPEKEQLS (91 aa)). Residues 96-188 (KEQLSFSVSV…PLESKTLNER (93 aa)) are disordered. The span at 128–148 (NDDESEDSDNDSEIIETDVQL) shows a compositional bias: acidic residues. Residues 215–275 (VRGNVFVAID…PKTYLQHVKE (61 aa)) form the SH3 domain.

It belongs to the nephrocystin-1 family. As to expression, expressed in ciliated sensory neurons of the head (amphid neurons) and the tail in hermaphrodites (phasmid neurons) and males (sensory ray neurons).

Its function is as follows. Plays a role in the extension of dendrites from phasmid ciliated sensory neurons. May be necessary for initial assembly of the cilium. This is Nephrocystin-1-like protein from Caenorhabditis elegans.